We begin with the raw amino-acid sequence, 974 residues long: Zinc finger protein 280D (974 aa).

Residues lysine 44, lysine 46, lysine 86, lysine 99, lysine 138, lysine 201, lysine 222, lysine 245, lysine 287, and lysine 304 each participate in a glycyl lysine isopeptide (Lys-Gly) (interchain with G-Cter in SUMO2) cross-link. Residues lysine 188 to serine 216 form a disordered region. C2H2-type zinc fingers lie at residues phenylalanine 333 to histidine 355 and threonine 370 to histidine 393. The C2H2-type 3; degenerate zinc finger occupies threonine 400 to lysine 424. 2 consecutive C2H2-type zinc fingers follow at residues tyrosine 430–histidine 453 and leucine 459–histidine 481. 3 disordered regions span residues threonine 507–threonine 624, isoleucine 751–glycine 797, and valine 815–serine 974. Positions serine 539–serine 557 are enriched in low complexity. Serine 557 is modified (phosphoserine). Positions lysine 571 to alanine 587 are enriched in polar residues. Low complexity predominate over residues lysine 591–serine 611. Residues threonine 612 to threonine 624 show a composition bias toward polar residues. Lysine 752 is covalently cross-linked (Glycyl lysine isopeptide (Lys-Gly) (interchain with G-Cter in SUMO2)). The segment covering valine 763–glycine 775 has biased composition (basic and acidic residues). The span at valine 817–isoleucine 829 shows a compositional bias: polar residues. Residues leucine 830 to glutamine 860 show a composition bias toward basic and acidic residues. A compositionally biased stretch (polar residues) spans serine 861–serine 884. Serine 904 and serine 907 each carry phosphoserine. The segment covering serine 938–glycine 950 has biased composition (polar residues).

The protein localises to the nucleus. In terms of biological role, may function as a transcription factor. This is Zinc finger protein 280D (Znf280d) from Mus musculus (Mouse).